The following is a 43-amino-acid chain: Alpha-1-antiproteinase 4 (43 aa).

This sequence belongs to the serpin family. In terms of processing, N-glycosylated with carbohydrates having biantennary side chains. In terms of tissue distribution, plasma.

The protein resides in the secreted. The chain is Alpha-1-antiproteinase 4 from Equus caballus (Horse).